Here is a 357-residue protein sequence, read N- to C-terminus: Beta-hexosaminidase (357 aa).

Residues D66, R74, R140, and 170–171 each bind substrate; that span reads KH. The Proton donor/acceptor role is filled by H183. D254 acts as the Nucleophile in catalysis.

This sequence belongs to the glycosyl hydrolase 3 family. NagZ subfamily.

The protein resides in the cytoplasm. It catalyses the reaction Hydrolysis of terminal non-reducing N-acetyl-D-hexosamine residues in N-acetyl-beta-D-hexosaminides.. It participates in cell wall biogenesis; peptidoglycan recycling. Plays a role in peptidoglycan recycling by cleaving the terminal beta-1,4-linked N-acetylglucosamine (GlcNAc) from peptide-linked peptidoglycan fragments, giving rise to free GlcNAc, anhydro-N-acetylmuramic acid and anhydro-N-acetylmuramic acid-linked peptides. This is Beta-hexosaminidase from Chromobacterium violaceum (strain ATCC 12472 / DSM 30191 / JCM 1249 / CCUG 213 / NBRC 12614 / NCIMB 9131 / NCTC 9757 / MK).